Consider the following 53-residue polypeptide: Large ribosomal subunit protein eL40 (53 aa).

This sequence belongs to the eukaryotic ribosomal protein eL40 family.

The polypeptide is Large ribosomal subunit protein eL40 (Pyrobaculum neutrophilum (strain DSM 2338 / JCM 9278 / NBRC 100436 / V24Sta) (Thermoproteus neutrophilus)).